Reading from the N-terminus, the 359-residue chain is GDSL esterase/lipase At5g03610 (359 aa).

A signal peptide spans 1 to 22 (MDSLIKLFFCLFIFLCTSLLFG). The active-site Nucleophile is the S50. N-linked (GlcNAc...) asparagine glycans are attached at residues N136, N236, and N259. Catalysis depends on residues D332 and H335.

It belongs to the 'GDSL' lipolytic enzyme family.

The protein resides in the secreted. The sequence is that of GDSL esterase/lipase At5g03610 from Arabidopsis thaliana (Mouse-ear cress).